A 353-amino-acid chain; its full sequence is MQFEVLKRFFPKESLKNCKGALWVHTASIGEFNTFLPILKELKREHRILLTYFSPRAREYLKTKSDFYDCLHPLPLDNPFSVKRFEELSKPKALIVVEREFWPSLIIFTKVPKILVNAYAKGSLIEKILSKKFDLIIMRTQEDVEKFKTFGAKRVFSCGNLKFICQKGKGIKLKGEFIVAGSIHTGEVEIILKAFKEIKKTYSSLKLILVPRHIENAKIFEKKARDFGFKTSFFENLEGDVILVDRFGILKELYPVGKIAIVGGTFVNIGGHNLLEPTCWGIPVIYGPYTHKVNDLKEFLEKEGAGFEVKNETELVTKLTELLSVKKEIKVEEKSREIKGCYLEKLREFLRGL.

Residue E31 is the Proton acceptor of the active site. CMP contacts are provided by residues 211–212, 247–249, and 273–276; these read PR, FGI, and NLLE.

Belongs to the glycosyltransferase group 1 family. Glycosyltransferase 30 subfamily. In terms of assembly, can form homodimer, homotrimer and homotetramer.

Its subcellular location is the cell inner membrane. The catalysed reaction is lipid IVA (E. coli) + CMP-3-deoxy-beta-D-manno-octulosonate = alpha-Kdo-(2-&gt;6)-lipid IVA (E. coli) + CMP + H(+). It participates in bacterial outer membrane biogenesis; LPS core biosynthesis. Involved in lipopolysaccharide (LPS) biosynthesis. Catalyzes the transfer of a single 3-deoxy-D-manno-octulosonate (Kdo) residue from CMP-Kdo to lipid IV(A), the tetraacyldisaccharide-1,4'-bisphosphate precursor of lipid A. Is strictly monofunctional, i.e. is capable of adding only a single Kdo residue to the acceptor lipid. The chain is 3-deoxy-D-manno-octulosonic acid transferase (kdtA) from Aquifex aeolicus (strain VF5).